A 364-amino-acid chain; its full sequence is MAKRCLIMAGGTGGHVFPGLAVANALRAEGWDIHWLGTAERMEAQVVPKHDIPIHFIPVKGLRGKGISARIQGAVALVKSLFSARRIIKRLQPDIVVGFGGYASGPGGVAAKSLGIPVIVHEQNAAAGMTNKLLSKLASRVLLGFDDAKEQFSGAADNVHTVGNPVRDDIWQVKPKKRESYAGATSLNMLVVGGSLGAQILNETVPETCGVLNGLSIKHQCGKGNSDGVVKAYESVGADMANVELSDFIDNMAAAYEWADFIVCRAGALTVSEVAASGRAAIFVPLPFAVDDHQTKNAQSLVKQNAALMIAQSVLKQNLGQAVRRWLEHPEDCLKMGALAKTCASIHATENVVSHVKSVVGEGD.

Residues 12–14 (TGG), Asn124, Arg167, Ser195, Ile249, 268–273 (ALTVSE), and Gln294 each bind UDP-N-acetyl-alpha-D-glucosamine.

This sequence belongs to the glycosyltransferase 28 family. MurG subfamily.

The protein localises to the cell inner membrane. The catalysed reaction is di-trans,octa-cis-undecaprenyl diphospho-N-acetyl-alpha-D-muramoyl-L-alanyl-D-glutamyl-meso-2,6-diaminopimeloyl-D-alanyl-D-alanine + UDP-N-acetyl-alpha-D-glucosamine = di-trans,octa-cis-undecaprenyl diphospho-[N-acetyl-alpha-D-glucosaminyl-(1-&gt;4)]-N-acetyl-alpha-D-muramoyl-L-alanyl-D-glutamyl-meso-2,6-diaminopimeloyl-D-alanyl-D-alanine + UDP + H(+). It participates in cell wall biogenesis; peptidoglycan biosynthesis. In terms of biological role, cell wall formation. Catalyzes the transfer of a GlcNAc subunit on undecaprenyl-pyrophosphoryl-MurNAc-pentapeptide (lipid intermediate I) to form undecaprenyl-pyrophosphoryl-MurNAc-(pentapeptide)GlcNAc (lipid intermediate II). In Alteromonas mediterranea (strain DSM 17117 / CIP 110805 / LMG 28347 / Deep ecotype), this protein is UDP-N-acetylglucosamine--N-acetylmuramyl-(pentapeptide) pyrophosphoryl-undecaprenol N-acetylglucosamine transferase.